Reading from the N-terminus, the 145-residue chain is uncharacterized protein (145 aa).

Residues 1–41 (MEQHYHQQNQLRQLKQQQLKELLQQQSKDKEEDEQKHDDYR) are a coiled coil. The interval 1 to 91 (MEQHYHQQNQ…LQISEPEGES (91 aa)) is disordered. Low complexity predominate over residues 7–26 (QQNQLRQLKQQQLKELLQQQ). Basic and acidic residues predominate over residues 27–42 (SKDKEEDEQKHDDYRS). Low complexity predominate over residues 43–58 (PTKTTTTTATSTSAAT).

This is an uncharacterized protein from Dictyostelium discoideum (Social amoeba).